The sequence spans 248 residues: Cobalt transport protein CbiM (248 aa).

Positions 1–31 (MLKVIKKYRKFITFLMIGLVYTLAYPATAHA) are cleaved as a signal peptide. Transmembrane regions (helical) follow at residues 39 to 59 (LPPR…IYGL), 75 to 95 (VMLA…LPSV), 107 to 127 (LGTV…VLLF), 139 to 159 (TLGA…YAVW), 173 to 195 (LFLC…LAIV), and 213 to 233 (IYAI…VIVY).

It belongs to the CbiM family. Forms an energy-coupling factor (ECF) transporter complex composed of an ATP-binding protein (A component, CbiO), a transmembrane protein (T component, CbiQ) and 2 possible substrate-capture proteins (S components, CbiM and CbiN) of unknown stoichimetry.

It is found in the cell membrane. It functions in the pathway cofactor biosynthesis; adenosylcobalamin biosynthesis. Part of the energy-coupling factor (ECF) transporter complex CbiMNOQ involved in cobalt import. This Limosilactobacillus reuteri (strain DSM 20016) (Lactobacillus reuteri) protein is Cobalt transport protein CbiM.